A 901-amino-acid polypeptide reads, in one-letter code: Protein translocase subunit SecA (901 aa).

ATP-binding positions include Gln87, 105 to 109, and Asp512; that span reads GEGKT. Positions 852 to 901 are disordered; it reads AQMQQLSHQSDDEAAAEDLAAQTGERKVGRNDPCPCGSGKKYKQCHGRLS. Zn(2+) is bound by residues Cys885, Cys887, Cys896, and His897. Residues 891–901 are compositionally biased toward basic residues; it reads KKYKQCHGRLS.

Belongs to the SecA family. Monomer and homodimer. Part of the essential Sec protein translocation apparatus which comprises SecA, SecYEG and auxiliary proteins SecDF-YajC and YidC. The cofactor is Zn(2+).

The protein resides in the cell inner membrane. Its subcellular location is the cytoplasm. The catalysed reaction is ATP + H2O + cellular proteinSide 1 = ADP + phosphate + cellular proteinSide 2.. In terms of biological role, part of the Sec protein translocase complex. Interacts with the SecYEG preprotein conducting channel. Has a central role in coupling the hydrolysis of ATP to the transfer of proteins into and across the cell membrane, serving both as a receptor for the preprotein-SecB complex and as an ATP-driven molecular motor driving the stepwise translocation of polypeptide chains across the membrane. This Klebsiella pneumoniae (strain 342) protein is Protein translocase subunit SecA.